A 549-amino-acid chain; its full sequence is Hydroxylamine reductase (549 aa).

[4Fe-4S] cluster is bound by residues cysteine 5, cysteine 8, cysteine 17, and cysteine 23. Residues histidine 242, glutamate 266, cysteine 310, cysteine 402, cysteine 430, cysteine 455, glutamate 490, and lysine 492 each contribute to the hybrid [4Fe-2O-2S] cluster site. The residue at position 402 (cysteine 402) is a Cysteine persulfide.

This sequence belongs to the HCP family. The cofactor is [4Fe-4S] cluster. Requires hybrid [4Fe-2O-2S] cluster as cofactor.

The protein resides in the cytoplasm. The catalysed reaction is A + NH4(+) + H2O = hydroxylamine + AH2 + H(+). Functionally, catalyzes the reduction of hydroxylamine to form NH(3) and H(2)O. This Clostridium novyi (strain NT) protein is Hydroxylamine reductase.